The sequence spans 689 residues: Glycine--tRNA ligase beta subunit (689 aa).

Belongs to the class-II aminoacyl-tRNA synthetase family. In terms of assembly, tetramer of two alpha and two beta subunits.

It is found in the cytoplasm. It carries out the reaction tRNA(Gly) + glycine + ATP = glycyl-tRNA(Gly) + AMP + diphosphate. The polypeptide is Glycine--tRNA ligase beta subunit (Salmonella heidelberg (strain SL476)).